Reading from the N-terminus, the 366-residue chain is Phospho-N-acetylmuramoyl-pentapeptide-transferase (366 aa).

The next 10 helical transmembrane spans lie at 27–47, 71–91, 93–113, 134–154, 174–194, 205–225, 245–265, 268–288, 294–314, and 343–363; these read AALF…INSL, TPTM…LLWA, LSNV…AIGF, LGIE…TALA, FLIN…VGAG, GLAI…AYLA, LAVV…FNAP, AIFM…TVAV, IVMA…IIQV, and QVVI…LSTL.

Belongs to the glycosyltransferase 4 family. MraY subfamily. Mg(2+) serves as cofactor.

The protein localises to the cell inner membrane. It catalyses the reaction UDP-N-acetyl-alpha-D-muramoyl-L-alanyl-gamma-D-glutamyl-meso-2,6-diaminopimeloyl-D-alanyl-D-alanine + di-trans,octa-cis-undecaprenyl phosphate = di-trans,octa-cis-undecaprenyl diphospho-N-acetyl-alpha-D-muramoyl-L-alanyl-D-glutamyl-meso-2,6-diaminopimeloyl-D-alanyl-D-alanine + UMP. Its pathway is cell wall biogenesis; peptidoglycan biosynthesis. In terms of biological role, catalyzes the initial step of the lipid cycle reactions in the biosynthesis of the cell wall peptidoglycan: transfers peptidoglycan precursor phospho-MurNAc-pentapeptide from UDP-MurNAc-pentapeptide onto the lipid carrier undecaprenyl phosphate, yielding undecaprenyl-pyrophosphoryl-MurNAc-pentapeptide, known as lipid I. The protein is Phospho-N-acetylmuramoyl-pentapeptide-transferase of Rhizobium etli (strain CIAT 652).